Here is a 440-residue protein sequence, read N- to C-terminus: GTPase Obg (440 aa).

Residues 5–163 (STFVDQTKIE…RTLRLELKVL (159 aa)) form the Obg domain. Residues 164 to 338 (ADVGLVGFPS…LMSRAADLVS (175 aa)) enclose the OBG-type G domain. GTP-binding positions include 170–177 (GFPSVGKS), 195–199 (FTTLK), 217–220 (DLPG), 288–291 (SQMD), and 319–321 (SSV). Mg(2+) contacts are provided by S177 and T197. Residues 362–440 (YHRPEKMEFT…IGDFSFEFVQ (79 aa)) form the OCT domain.

This sequence belongs to the TRAFAC class OBG-HflX-like GTPase superfamily. OBG GTPase family. Monomer. Mg(2+) serves as cofactor.

The protein resides in the cytoplasm. An essential GTPase which binds GTP, GDP and possibly (p)ppGpp with moderate affinity, with high nucleotide exchange rates and a fairly low GTP hydrolysis rate. Plays a role in control of the cell cycle, stress response, ribosome biogenesis and in those bacteria that undergo differentiation, in morphogenesis control. The sequence is that of GTPase Obg from Lactobacillus delbrueckii subsp. bulgaricus (strain ATCC 11842 / DSM 20081 / BCRC 10696 / JCM 1002 / NBRC 13953 / NCIMB 11778 / NCTC 12712 / WDCM 00102 / Lb 14).